A 154-amino-acid polypeptide reads, in one-letter code: Crossover junction endodeoxyribonuclease RuvC (154 aa).

Catalysis depends on residues aspartate 7, glutamate 67, and aspartate 139. The Mg(2+) site is built by aspartate 7, glutamate 67, and aspartate 139.

Belongs to the RuvC family. As to quaternary structure, homodimer which binds Holliday junction (HJ) DNA. The HJ becomes 2-fold symmetrical on binding to RuvC with unstacked arms; it has a different conformation from HJ DNA in complex with RuvA. In the full resolvosome a probable DNA-RuvA(4)-RuvB(12)-RuvC(2) complex forms which resolves the HJ. The cofactor is Mg(2+).

It localises to the cytoplasm. It carries out the reaction Endonucleolytic cleavage at a junction such as a reciprocal single-stranded crossover between two homologous DNA duplexes (Holliday junction).. The RuvA-RuvB-RuvC complex processes Holliday junction (HJ) DNA during genetic recombination and DNA repair. Endonuclease that resolves HJ intermediates. Cleaves cruciform DNA by making single-stranded nicks across the HJ at symmetrical positions within the homologous arms, yielding a 5'-phosphate and a 3'-hydroxyl group; requires a central core of homology in the junction. The consensus cleavage sequence is 5'-(A/T)TT(C/G)-3'. Cleavage occurs on the 3'-side of the TT dinucleotide at the point of strand exchange. HJ branch migration catalyzed by RuvA-RuvB allows RuvC to scan DNA until it finds its consensus sequence, where it cleaves and resolves the cruciform DNA. This is Crossover junction endodeoxyribonuclease RuvC from Prochlorococcus marinus (strain MIT 9303).